A 302-amino-acid chain; its full sequence is Endochitinase 4 (302 aa).

The N-terminal stretch at 1–18 is a signal peptide; sequence EFTALSLLFSLLLLTASA. A Chitin-binding type-1 domain is found at 19 to 60; the sequence is EQCGKQAGGARCAAGLCCSNFGWCGNTNDYCGPGKCQSQCPS. 4 disulfide bridges follow: cysteine 21–cysteine 36, cysteine 30–cysteine 42, cysteine 35–cysteine 49, and cysteine 54–cysteine 58. The disordered stretch occupies residues 59–79; that stretch reads PSGPSPKPPTPGPGPSGGDIG. A compositionally biased stretch (pro residues) spans 61–72; the sequence is GPSPKPPTPGPG. The active-site Proton donor is glutamate 144. Residues cysteine 162 and cysteine 182 are joined by a disulfide bond.

The protein belongs to the glycosyl hydrolase 19 family. Chitinase class I subfamily.

It is found in the vacuole. It catalyses the reaction Random endo-hydrolysis of N-acetyl-beta-D-glucosaminide (1-&gt;4)-beta-linkages in chitin and chitodextrins.. In terms of biological role, defense against chitin-containing fungal pathogens. This chain is Endochitinase 4 (CHTB4), found in Solanum tuberosum (Potato).